Reading from the N-terminus, the 470-residue chain is Glutamate--tRNA ligase 2 (470 aa).

The 'HIGH' region motif lies at 11–21 (PSPTGHLHLGG). The 'KMSKS' region signature appears at 238–242 (KLSKR). Residue K241 coordinates ATP.

It belongs to the class-I aminoacyl-tRNA synthetase family. Glutamate--tRNA ligase type 1 subfamily. Monomer.

Its subcellular location is the cytoplasm. It carries out the reaction tRNA(Glu) + L-glutamate + ATP = L-glutamyl-tRNA(Glu) + AMP + diphosphate. Functionally, catalyzes the attachment of glutamate to tRNA(Glu) in a two-step reaction: glutamate is first activated by ATP to form Glu-AMP and then transferred to the acceptor end of tRNA(Glu). This chain is Glutamate--tRNA ligase 2, found in Ehrlichia ruminantium (strain Gardel).